The chain runs to 339 residues: NADH-quinone oxidoreductase subunit H (339 aa).

The next 9 membrane-spanning stretches (helical) occupy residues 9–29, 50–70, 82–102, 115–135, 161–181, 187–207, 235–255, 275–295, and 311–331; these read IFPL…LILC, PNVV…KLLF, ILFI…WAVI, VGVL…IIAG, MGLV…SEII, MPWW…ISVL, MGFA…SAMT, IPGF…FLWI, and GWKV…SVLV.

The protein belongs to the complex I subunit 1 family. NDH-1 is composed of 14 different subunits. Subunits NuoA, H, J, K, L, M, N constitute the membrane sector of the complex.

The protein resides in the cell membrane. The enzyme catalyses a quinone + NADH + 5 H(+)(in) = a quinol + NAD(+) + 4 H(+)(out). NDH-1 shuttles electrons from NADH, via FMN and iron-sulfur (Fe-S) centers, to quinones in the respiratory chain. The immediate electron acceptor for the enzyme in this species is believed to be ubiquinone. Couples the redox reaction to proton translocation (for every two electrons transferred, four hydrogen ions are translocated across the cytoplasmic membrane), and thus conserves the redox energy in a proton gradient. This subunit may bind ubiquinone. The sequence is that of NADH-quinone oxidoreductase subunit H from Rickettsia africae (strain ESF-5).